Here is a 126-residue protein sequence, read N- to C-terminus: Small ribosomal subunit protein uS12 (126 aa).

Residue D89 is modified to 3-methylthioaspartic acid. Residues 99-126 form a disordered region; sequence RGSLDTSGVNDRKQGRSKYGTKKPKDKK. Residues 113 to 126 show a composition bias toward basic residues; it reads GRSKYGTKKPKDKK.

The protein belongs to the universal ribosomal protein uS12 family. Part of the 30S ribosomal subunit. Contacts proteins S8 and S17. May interact with IF1 in the 30S initiation complex.

With S4 and S5 plays an important role in translational accuracy. Its function is as follows. Interacts with and stabilizes bases of the 16S rRNA that are involved in tRNA selection in the A site and with the mRNA backbone. Located at the interface of the 30S and 50S subunits, it traverses the body of the 30S subunit contacting proteins on the other side and probably holding the rRNA structure together. The combined cluster of proteins S8, S12 and S17 appears to hold together the shoulder and platform of the 30S subunit. The polypeptide is Small ribosomal subunit protein uS12 (Legionella pneumophila (strain Paris)).